Here is a 297-residue protein sequence, read N- to C-terminus: 4-hydroxy-tetrahydrodipicolinate synthase (297 aa).

Residue T50 coordinates pyruvate. Y138 (proton donor/acceptor) is an active-site residue. Catalysis depends on K166, which acts as the Schiff-base intermediate with substrate. A pyruvate-binding site is contributed by I208.

The protein belongs to the DapA family. Homotetramer; dimer of dimers.

It is found in the cytoplasm. It catalyses the reaction L-aspartate 4-semialdehyde + pyruvate = (2S,4S)-4-hydroxy-2,3,4,5-tetrahydrodipicolinate + H2O + H(+). It functions in the pathway amino-acid biosynthesis; L-lysine biosynthesis via DAP pathway; (S)-tetrahydrodipicolinate from L-aspartate: step 3/4. Its function is as follows. Catalyzes the condensation of (S)-aspartate-beta-semialdehyde [(S)-ASA] and pyruvate to 4-hydroxy-tetrahydrodipicolinate (HTPA). The polypeptide is 4-hydroxy-tetrahydrodipicolinate synthase (Haemophilus ducreyi (strain 35000HP / ATCC 700724)).